The following is a 117-amino-acid chain: Hydrogenase maturation factor HypA (117 aa).

H2 lines the Ni(2+) pocket. Residues C74, C77, C91, and C94 each contribute to the Zn(2+) site.

Belongs to the HypA/HybF family.

Its function is as follows. Involved in the maturation of [NiFe] hydrogenases. Required for nickel insertion into the metal center of the hydrogenase. The sequence is that of Hydrogenase maturation factor HypA from Helicobacter pylori (strain J99 / ATCC 700824) (Campylobacter pylori J99).